The following is a 141-amino-acid chain: Large-conductance mechanosensitive channel (141 aa).

Transmembrane regions (helical) follow at residues 8-28 (FALKGNVVDLAIGVIIGAAFG), 38-58 (IIMPFFGALGGLDFSNYFFPL), and 80-100 (GNFLTVAVNFLIIAFVLFLIV).

It belongs to the MscL family. Homopentamer.

The protein resides in the cell inner membrane. Its function is as follows. Channel that opens in response to stretch forces in the membrane lipid bilayer. May participate in the regulation of osmotic pressure changes within the cell. The chain is Large-conductance mechanosensitive channel from Beijerinckia indica subsp. indica (strain ATCC 9039 / DSM 1715 / NCIMB 8712).